The primary structure comprises 262 residues: Ribosomal RNA small subunit methyltransferase A (262 aa).

Residues H11, I13, G38, E60, D85, and N105 each contribute to the S-adenosyl-L-methionine site.

This sequence belongs to the class I-like SAM-binding methyltransferase superfamily. rRNA adenine N(6)-methyltransferase family. RsmA subfamily.

Its subcellular location is the cytoplasm. The catalysed reaction is adenosine(1518)/adenosine(1519) in 16S rRNA + 4 S-adenosyl-L-methionine = N(6)-dimethyladenosine(1518)/N(6)-dimethyladenosine(1519) in 16S rRNA + 4 S-adenosyl-L-homocysteine + 4 H(+). Functionally, specifically dimethylates two adjacent adenosines (A1518 and A1519) in the loop of a conserved hairpin near the 3'-end of 16S rRNA in the 30S particle. May play a critical role in biogenesis of 30S subunits. The polypeptide is Ribosomal RNA small subunit methyltransferase A (Neorickettsia sennetsu (strain ATCC VR-367 / Miyayama) (Ehrlichia sennetsu)).